Here is a 204-residue protein sequence, read N- to C-terminus: MLKIAIPKGRLLEEVSELFLSKSLIPSKIEESRKLIVDIDYFRFLIVKPSDVATYVEQGAADIGVVGLDVLKEEPKEIYEILDLKNIGKCSMVVAGKPEKLGDYKILHFTKVATKYVNIARSFFEGKDVSINIIKLNGSVEIAPIIGLSDYIVDITQTGKTLKENGLIVMEKIFDSHAKIICNKVAFRIKKYDIFKILDKLSDI.

Belongs to the ATP phosphoribosyltransferase family. Short subfamily. In terms of assembly, heteromultimer composed of HisG and HisZ subunits.

It localises to the cytoplasm. It catalyses the reaction 1-(5-phospho-beta-D-ribosyl)-ATP + diphosphate = 5-phospho-alpha-D-ribose 1-diphosphate + ATP. It functions in the pathway amino-acid biosynthesis; L-histidine biosynthesis; L-histidine from 5-phospho-alpha-D-ribose 1-diphosphate: step 1/9. Catalyzes the condensation of ATP and 5-phosphoribose 1-diphosphate to form N'-(5'-phosphoribosyl)-ATP (PR-ATP). Has a crucial role in the pathway because the rate of histidine biosynthesis seems to be controlled primarily by regulation of HisG enzymatic activity. The sequence is that of ATP phosphoribosyltransferase from Hydrogenobaculum sp. (strain Y04AAS1).